The chain runs to 497 residues: Acetyl-coenzyme A carboxylase carboxyl transferase subunit beta, chloroplastic (497 aa).

The region spanning 230–497 (LWVQCENCYG…FFPVNSNSIK (268 aa)) is the CoA carboxyltransferase N-terminal domain. Zn(2+) contacts are provided by C234, C237, C253, and C256. Residues 234 to 256 (CENCYGLNYKKFFRSKFNICEQC) form a C4-type zinc finger.

This sequence belongs to the AccD/PCCB family. As to quaternary structure, acetyl-CoA carboxylase is a heterohexamer composed of biotin carboxyl carrier protein, biotin carboxylase and 2 subunits each of ACCase subunit alpha and ACCase plastid-coded subunit beta (accD). Zn(2+) serves as cofactor.

It is found in the plastid. The protein localises to the chloroplast stroma. The catalysed reaction is N(6)-carboxybiotinyl-L-lysyl-[protein] + acetyl-CoA = N(6)-biotinyl-L-lysyl-[protein] + malonyl-CoA. Its pathway is lipid metabolism; malonyl-CoA biosynthesis; malonyl-CoA from acetyl-CoA: step 1/1. In terms of biological role, component of the acetyl coenzyme A carboxylase (ACC) complex. Biotin carboxylase (BC) catalyzes the carboxylation of biotin on its carrier protein (BCCP) and then the CO(2) group is transferred by the transcarboxylase to acetyl-CoA to form malonyl-CoA. The chain is Acetyl-coenzyme A carboxylase carboxyl transferase subunit beta, chloroplastic from Nandina domestica (Heavenly bamboo).